A 256-amino-acid polypeptide reads, in one-letter code: Glutamate racemase (256 aa).

Substrate contacts are provided by residues 5–6 and 37–38; these read DS and YG. The Proton donor/acceptor role is filled by C69. Substrate is bound at residue 70 to 71; that stretch reads NT. The Proton donor/acceptor role is filled by C181. 182–183 contributes to the substrate binding site; that stretch reads TH.

It belongs to the aspartate/glutamate racemases family.

It carries out the reaction L-glutamate = D-glutamate. Its pathway is cell wall biogenesis; peptidoglycan biosynthesis. In terms of biological role, provides the (R)-glutamate required for cell wall biosynthesis. The protein is Glutamate racemase of Buchnera aphidicola subsp. Schizaphis graminum (strain Sg).